A 328-amino-acid polypeptide reads, in one-letter code: Integrator complex subunit 12 (328 aa).

A sufficient for binding to IntS1 and IntS9 and for 3'-end snRNA processing region spans residues 1-45 (MAANIAAAAAAAQEVDPVLKKAIKLLHSSNPTSAAELRLLLDEAL). The PHD-type zinc finger occupies 128 to 185 (DLNCCVCGEMVFTATNRLIECSKCGAMYHQECHKPPITKEEAADDQEQNWQCDTCCNK). Low complexity-rich tracts occupy residues 215–233 (KAKS…NSSS), 241–264 (SSST…SSSS), 274–283 (KSTAASSLSA), and 292–311 (SSGT…SKSS). The segment at 215-328 (KAKSSVASSR…GSSSKRRSKQ (114 aa)) is disordered.

This sequence belongs to the Integrator subunit 12 family. Belongs to the multiprotein complex Integrator, at least composed of IntS1, IntS2, IntS3, IntS4, omd/IntS5, IntS6, defl/IntS7, IntS8, IntS9, IntS10, IntS11, IntS12, asun/IntS13, IntS14 and IntS15. The core complex associates with protein phosphatase 2A subunits mts/PP2A and Pp2A-29B, to form the Integrator-PP2A (INTAC) complex. Within the complex, interacts with IntS1 and IntS9. Interaction with IntS1 is likely to be important for promoting 3'-end processing of snRNAs.

The protein localises to the nucleus. Its function is as follows. Component of the integrator complex, a multiprotein complex that terminates RNA polymerase II (Pol II) transcription in the promoter-proximal region of genes. The integrator complex provides a quality checkpoint during transcription elongation by driving premature transcription termination of transcripts that are unfavorably configured for transcriptional elongation: the complex terminates transcription by (1) catalyzing dephosphorylation of the C-terminal domain (CTD) of Pol II subunit Polr2A/Rbp1 and Spt5, and (2) degrading the exiting nascent RNA transcript via endonuclease activity. The integrator complex is also involved in the 3'-end processing of the U7 snRNA, and also the spliceosomal snRNAs U1, U2, U4 and U5. Required for the normal expression of the Integrator complex component IntS1. This chain is Integrator complex subunit 12, found in Drosophila melanogaster (Fruit fly).